The chain runs to 627 residues: Phosphomethylpyrimidine synthase (627 aa).

The span at Met-1 to Pro-24 shows a compositional bias: polar residues. Residues Met-1–Val-29 are disordered. Residues Asn-231, Met-260, Tyr-289, His-325, Ser-345–Gly-347, Asp-386–Arg-389, and Glu-425 each bind substrate. A Zn(2+)-binding site is contributed by His-429. Tyr-452 lines the substrate pocket. Residue His-493 participates in Zn(2+) binding. Residues Cys-573, Cys-576, and Cys-581 each contribute to the [4Fe-4S] cluster site.

This sequence belongs to the ThiC family. Homodimer. It depends on [4Fe-4S] cluster as a cofactor.

The enzyme catalyses 5-amino-1-(5-phospho-beta-D-ribosyl)imidazole + S-adenosyl-L-methionine = 4-amino-2-methyl-5-(phosphooxymethyl)pyrimidine + CO + 5'-deoxyadenosine + formate + L-methionine + 3 H(+). It functions in the pathway cofactor biosynthesis; thiamine diphosphate biosynthesis. Catalyzes the synthesis of the hydroxymethylpyrimidine phosphate (HMP-P) moiety of thiamine from aminoimidazole ribotide (AIR) in a radical S-adenosyl-L-methionine (SAM)-dependent reaction. In Pseudomonas aeruginosa (strain LESB58), this protein is Phosphomethylpyrimidine synthase.